Reading from the N-terminus, the 253-residue chain is UPF0174 protein jhp_1494 (253 aa).

Belongs to the UPF0174 family.

In Helicobacter pylori (strain J99 / ATCC 700824) (Campylobacter pylori J99), this protein is UPF0174 protein jhp_1494.